An 830-amino-acid chain; its full sequence is V-type proton ATPase 116 kDa subunit a 3 (830 aa).

Residues 1-385 (MGSMFRSEEV…DAYGVGRYQE (385 aa)) lie on the Cytoplasmic side of the membrane. Residues 139 to 158 (QLAAAHTDGASERTPLLQAP) are disordered. Residues 386 to 404 (VNPAPYTIITFPFLFAVMF) form a helical membrane-spanning segment. Residues 405-406 (GD) are Vacuolar-facing. A helical transmembrane segment spans residues 407-423 (VGHGLLMFLFALAMVLA). Residues 424 to 438 (ENRPAVKAAQNEIWQ) are Cytoplasmic-facing. A helical membrane pass occupies residues 439-468 (TFFRGRYLLLLMGLFSIYTGFIYNECFSRA). Topologically, residues 469–532 (TSIFPSGWSV…AANHLSFLNS (64 aa)) are vacuolar. The helical transmembrane segment at 533-552 (FKMKMSVILGVVHMAFGVVL) threads the bilayer. Topologically, residues 553–570 (GVFNHVHFGQRHRLLLET) are cytoplasmic. A helical transmembrane segment spans residues 571 to 591 (LPELTFLLGLFGYLVFLVIYK). Residues 592 to 635 (WLCVWAARAASAPSILIHFINMFLFSHSPSNRLLYPRQEVVQAT) are Vacuolar-facing. The chain crosses the membrane as a helical span at residues 636-655 (LVVLALAMVPILLLGTPLHL). The Cytoplasmic portion of the chain corresponds to 656–720 (LHRHRRRLRR…EVLMHQAIHT (65 aa)). Positions 681 to 701 (LPDASVNGWSSDEEKAGGLDD) are disordered. Residues 721-745 (IEFCLGCVSNTASYLRLWALSLAHA) form a helical membrane-spanning segment. Residues 746–766 (QLSEVLWAMVMRIGLGLGREV) are Vacuolar-facing. The helical transmembrane segment at 767-807 (GVAAVVLVPIFAAFAVMTVAILLVMEGLSAFLHALRLHWVE) threads the bilayer. At 808–830 (FQNKFYSGTGYKLSPFTFAATDD) the chain is on the cytoplasmic side.

Belongs to the V-ATPase 116 kDa subunit family. As to quaternary structure, V-ATPase is a heteromultimeric enzyme made up of two complexes: the ATP-hydrolytic V1 complex and the proton translocation V0 complex. The V1 complex consists of three catalytic AB heterodimers that form a heterohexamer, three peripheral stalks each consisting of EG heterodimers, one central rotor including subunits D and F, and the regulatory subunits C and H. The proton translocation complex V0 consists of the proton transport subunit a, a ring of proteolipid subunits c9c'', rotary subunit d, subunits e and f, and the accessory subunits ATP6AP1/Ac45 and ATP6AP2/PRR. In terms of tissue distribution, isoform long is highly expressed in osteoclastomas. Isoform short is highly expressed in thymus.

It localises to the membrane. Subunit of the V0 complex of vacuolar(H+)-ATPase (V-ATPase), a multisubunit enzyme composed of a peripheral complex (V1) that hydrolyzes ATP and a membrane integral complex (V0) that translocates protons. V-ATPase is responsible for acidifying and maintaining the pH of intracellular compartments and in some cell types, is targeted to the plasma membrane, where it is responsible for acidifying the extracellular environment. Seems to be directly involved in T-cell activation. This chain is V-type proton ATPase 116 kDa subunit a 3 (TCIRG1), found in Homo sapiens (Human).